A 432-amino-acid polypeptide reads, in one-letter code: Serine--tRNA ligase (432 aa).

L-serine is bound at residue 238–240; sequence TAE. Residue 269-271 coordinates ATP; that stretch reads RSE. Residue glutamate 292 participates in L-serine binding. 357–360 contributes to the ATP binding site; it reads EISS. Serine 393 lines the L-serine pocket.

This sequence belongs to the class-II aminoacyl-tRNA synthetase family. Type-1 seryl-tRNA synthetase subfamily. In terms of assembly, homodimer. The tRNA molecule binds across the dimer.

It localises to the cytoplasm. It catalyses the reaction tRNA(Ser) + L-serine + ATP = L-seryl-tRNA(Ser) + AMP + diphosphate + H(+). The catalysed reaction is tRNA(Sec) + L-serine + ATP = L-seryl-tRNA(Sec) + AMP + diphosphate + H(+). Its pathway is aminoacyl-tRNA biosynthesis; selenocysteinyl-tRNA(Sec) biosynthesis; L-seryl-tRNA(Sec) from L-serine and tRNA(Sec): step 1/1. Functionally, catalyzes the attachment of serine to tRNA(Ser). Is also able to aminoacylate tRNA(Sec) with serine, to form the misacylated tRNA L-seryl-tRNA(Sec), which will be further converted into selenocysteinyl-tRNA(Sec). This Hyphomonas neptunium (strain ATCC 15444) protein is Serine--tRNA ligase.